Reading from the N-terminus, the 158-residue chain is NAD(P)H-quinone oxidoreductase subunit J, chloroplastic (158 aa).

This sequence belongs to the complex I 30 kDa subunit family. In terms of assembly, NDH is composed of at least 16 different subunits, 5 of which are encoded in the nucleus.

Its subcellular location is the plastid. It localises to the chloroplast thylakoid membrane. It catalyses the reaction a plastoquinone + NADH + (n+1) H(+)(in) = a plastoquinol + NAD(+) + n H(+)(out). It carries out the reaction a plastoquinone + NADPH + (n+1) H(+)(in) = a plastoquinol + NADP(+) + n H(+)(out). Its function is as follows. NDH shuttles electrons from NAD(P)H:plastoquinone, via FMN and iron-sulfur (Fe-S) centers, to quinones in the photosynthetic chain and possibly in a chloroplast respiratory chain. The immediate electron acceptor for the enzyme in this species is believed to be plastoquinone. Couples the redox reaction to proton translocation, and thus conserves the redox energy in a proton gradient. The polypeptide is NAD(P)H-quinone oxidoreductase subunit J, chloroplastic (Aethionema grandiflorum (Persian stone-cress)).